Here is a 368-residue protein sequence, read N- to C-terminus: Endoglucanase (368 aa).

An N-terminal signal peptide occupies residues Met1 to Ala21. The active-site Proton donor is Glu55. Catalysis depends on Asp116, which acts as the Nucleophile.

The protein belongs to the glycosyl hydrolase 8 (cellulase D) family.

The protein resides in the secreted. It carries out the reaction Endohydrolysis of (1-&gt;4)-beta-D-glucosidic linkages in cellulose, lichenin and cereal beta-D-glucans.. It functions in the pathway glycan metabolism; bacterial cellulose biosynthesis. In terms of biological role, hydrolyzes carboxymethylcellulose. The sequence is that of Endoglucanase (bcsZ) from Escherichia coli O157:H7.